Here is a 4555-residue protein sequence, read N- to C-terminus: Protocadherin Fat 3 (4555 aa).

An N-terminal signal peptide occupies residues 1–31 (MSVTMGHCMGTKPPSCIILLLLKLFATVSQG). Over 32 to 4153 (LPGTGPLGFH…AGHSYVGKEE (4122 aa)) the chain is Extracellular. Cadherin domains follow at residues 43–157 (THST…RPLF), 158–262 (SPTT…NEHA), 263–374 (PIIH…TPVR), 376–471 (EKDV…TPEF), 472–577 (QEAL…SPLF), 578–680 (EKVA…SKSF), 726–830 (KSFP…NPVF), 831–935 (LQDS…SPAF), 936–1042 (IPSS…TPYF), 1043–1147 (PDFA…APLT), 1148–1253 (SEPI…RPQF), 1254–1358 (PEKV…SPIP), 1362–1459 (DEPF…GPEF), 1460–1565 (SQPH…SPYF), 1566–1768 (TNPL…PPVF), 1769–1882 (LFSQ…PPVF), 1883–1985 (TQAV…TQSF), 1982–2083 (TQSF…SPVF), 2084–2185 (VGLP…MPVF), 2186–2286 (DKPF…PPVF), 2287–2393 (DQPT…PPVF), 2394–2495 (NQLI…SPAF), 2496–2599 (SQST…APQF), 2600–2707 (MTVE…LPSF), 2708–2813 (TQSQ…KPVF), 2814–2923 (ETST…APVF), 2924–3028 (AHEV…SPVC), 3029–3130 (DQVA…PPVF), 3131–3235 (SSNH…PPVF), 3236–3340 (ERRD…PPRF), 3341–3445 (SQDV…SPVF), 3446–3550 (TPAN…KPTA), and 3551–3660 (IPLE…PEDF). N-linked (GlcNAc...) asparagine glycosylation is present at Asn-48. Residue Asn-341 is glycosylated (N-linked (GlcNAc...) asparagine). Asn-481, Asn-562, Asn-667, Asn-799, Asn-879, Asn-898, and Asn-1006 each carry an N-linked (GlcNAc...) asparagine glycan. Asn-1367 and Asn-1429 each carry an N-linked (GlcNAc...) asparagine glycan. The N-linked (GlcNAc...) asparagine glycan is linked to Asn-1751. N-linked (GlcNAc...) asparagine glycosylation is found at Asn-1944, Asn-1993, and Asn-1996. Residues Asn-2208, Asn-2292, Asn-2331, and Asn-2467 are each glycosylated (N-linked (GlcNAc...) asparagine). N-linked (GlcNAc...) asparagine glycosylation is present at Asn-2734. Residue Asn-3000 is glycosylated (N-linked (GlcNAc...) asparagine). Asn-3201 is a glycosylation site (N-linked (GlcNAc...) asparagine). Residues Asn-3449, Asn-3618, and Asn-3741 are each glycosylated (N-linked (GlcNAc...) asparagine). In terms of domain architecture, EGF-like 1 spans 3794–3832 (SNDPCVEKPCPEDMQCVGYEASRRPFLCQCPPGKLGECS). 3 disulfides stabilise this stretch: Cys-3798–Cys-3809, Cys-3803–Cys-3821, and Cys-3823–Cys-3831. In terms of domain architecture, Laminin G-like spans 3834-4017 (HTSLSFAGNS…VGLTELKLGC (184 aa)). The N-linked (GlcNAc...) asparagine glycan is linked to Asn-3926. Intrachain disulfides connect Cys-3984-Cys-4017, Cys-4024-Cys-4035, Cys-4029-Cys-4045, Cys-4047-Cys-4056, Cys-4063-Cys-4074, Cys-4068-Cys-4083, Cys-4085-Cys-4094, Cys-4101-Cys-4112, Cys-4106-Cys-4121, and Cys-4123-Cys-4132. EGF-like domains follow at residues 4020 to 4057 (YPDA…TNCE) and 4059 to 4095 (EITA…VTCE). The EGF-like 4; calcium-binding domain maps to 4097–4133 (DVDECEREECENGGSCVNLFGSFFCNCTPGYVGQYCG). Residues 4154-4174 (LIGIAVVLFVIFTLIVLFIVF) traverse the membrane as a helical segment. Residues 4175 to 4555 (RKKVFRKNYS…FVETQQQTQV (381 aa)) lie on the Cytoplasmic side of the membrane. 2 disordered regions span residues 4300 to 4353 (IRKN…YHWD) and 4395 to 4474 (GGYD…LGGP). Over residues 4322-4343 (CFTNSNKGSNSEVQSLSSFQSD) the composition is skewed to polar residues. An omega-N-methylarginine mark is found at Arg-4508 and Arg-4518.

As to expression, restricted to the nervous system, mainly in brain. In brain, it is highly expressed in the olfactory bulb and retina. In the developing olfactory bulb, it localizes along the dendrites of these cells as well as in their axons to some extent. In retina, it cocentrates in the inner plexiform layer throughout development (at protein level).

It localises to the membrane. Functionally, may play a role in the interactions between neurites derived from specific subsets of neurons during development. The chain is Protocadherin Fat 3 (Fat3) from Mus musculus (Mouse).